The sequence spans 157 residues: S-ribosylhomocysteine lyase (157 aa).

Residues His-54, His-58, and Cys-126 each coordinate Fe cation.

Belongs to the LuxS family. Homodimer. Fe cation is required as a cofactor.

It carries out the reaction S-(5-deoxy-D-ribos-5-yl)-L-homocysteine = (S)-4,5-dihydroxypentane-2,3-dione + L-homocysteine. Its function is as follows. Involved in the synthesis of autoinducer 2 (AI-2) which is secreted by bacteria and is used to communicate both the cell density and the metabolic potential of the environment. The regulation of gene expression in response to changes in cell density is called quorum sensing. Catalyzes the transformation of S-ribosylhomocysteine (RHC) to homocysteine (HC) and 4,5-dihydroxy-2,3-pentadione (DPD). The sequence is that of S-ribosylhomocysteine lyase from Bacillus licheniformis (strain ATCC 14580 / DSM 13 / JCM 2505 / CCUG 7422 / NBRC 12200 / NCIMB 9375 / NCTC 10341 / NRRL NRS-1264 / Gibson 46).